Consider the following 435-residue polypeptide: Salicylate hydroxylase (435 aa).

An FAD-binding site is contributed by 12–41; sequence RVAIVGGGISGLALALSLCKHSHLNVQLFE.

Requires FAD as cofactor.

The catalysed reaction is salicylate + NADH + O2 + 2 H(+) = catechol + CO2 + NAD(+) + H2O. It functions in the pathway aromatic compound metabolism; naphthalene degradation. The protein is Salicylate hydroxylase (nahG) of Pseudomonas putida (Arthrobacter siderocapsulatus).